Reading from the N-terminus, the 369-residue chain is MELSEIKRNIDKYNQDLTQIRGSLDLENKETNIQEYEEMMAEPNFWDNQTKAQDIIDKNNALKAIVNGYKTLQAEVDDMDATWDLLQEEFDGEMKEDLEQEVINFKAKVDEYELQLLLDGPHDANNAILELHPGAGGTESQDWANMLFRMYQRYCEKKGFKVKTVDYLPGDEAGIKSVTLLIKGHNAYGYLKAEKGVHRLVRISPFDSSGRRHTSFASCDVIPDFNNDEIEIEINPDDITVDTFRASGAGGQHINKTESAIRITHHPSGIVVNNQNERSQIKNREAAMKMLKSKLYQLKLEEQAREMAEIRGEQKEIGWGSQIRSYVFHPYSMVKDHRTNEETGKVDAVMDGDIGPFIESYLRQTMSHD.

An N5-methylglutamine modification is found at glutamine 252.

Belongs to the prokaryotic/mitochondrial release factor family. Methylated by PrmC. Methylation increases the termination efficiency of RF2.

The protein resides in the cytoplasm. In terms of biological role, peptide chain release factor 2 directs the termination of translation in response to the peptide chain termination codons UGA and UAA. The chain is Peptide chain release factor 2 from Staphylococcus aureus (strain MRSA252).